The sequence spans 250 residues: 2,3-bisphosphoglycerate-dependent phosphoglycerate mutase (250 aa).

Substrate contacts are provided by residues 10–17, 23–24, Arg62, 89–92, Lys100, 116–117, and 185–186; these read RHGESQWN, TG, ERHY, RR, and GN. Catalysis depends on His11, which acts as the Tele-phosphohistidine intermediate. The Proton donor/acceptor role is filled by Glu89.

Belongs to the phosphoglycerate mutase family. BPG-dependent PGAM subfamily. In terms of assembly, homodimer.

The enzyme catalyses (2R)-2-phosphoglycerate = (2R)-3-phosphoglycerate. It participates in carbohydrate degradation; glycolysis; pyruvate from D-glyceraldehyde 3-phosphate: step 3/5. Its function is as follows. Catalyzes the interconversion of 2-phosphoglycerate and 3-phosphoglycerate. In Salmonella agona (strain SL483), this protein is 2,3-bisphosphoglycerate-dependent phosphoglycerate mutase.